The following is a 346-amino-acid chain: 2,5-dichlorohydroquinone reductive dechlorinase (346 aa).

The 112-residue stretch at 43–154 (PRFELFHFVF…YLCDALSGGT (112 aa)) folds into the GST N-terminal domain. The GST C-terminal domain maps to 189–335 (DRRPESMQAV…AIIQWPGHPP (147 aa)).

The protein belongs to the GST superfamily.

It carries out the reaction 2,5-dichlorohydroquinone + 2 glutathione = chlorohydroquinone + glutathione disulfide + chloride + H(+). It catalyses the reaction chlorohydroquinone + 2 glutathione = hydroquinone + glutathione disulfide + chloride + H(+). The protein operates within xenobiotic degradation; gamma-hexachlorocyclohexane degradation. Functionally, catalyzes the degradation of 2,5-dichlorohydroquinone (2,5-DCHQ) into hydroquinone (HQ) via chlorohydroquinone (CHQ). Is involved in the degradation pathway that allows S.japonicum UT26 to grow on gamma-hexachlorocyclohexane (gamma-HCH or lindane) as the sole source of carbon and energy. However, the conversion of CHQ to HQ by LinD seems not to be essential for this degradation pathway, because the conversion rate of CHQ to HQ is much lower than that of 2,5-DCHQ to CHQ. CHQ is more efficiently degraded by LinE in strain UT26. The sequence is that of 2,5-dichlorohydroquinone reductive dechlorinase from Sphingobium indicum (strain DSM 16413 / CCM 7287 / MTCC 6362 / UT26 / NBRC 101211 / UT26S) (Sphingobium japonicum).